The sequence spans 358 residues: Ferredoxin--NADP reductase (358 aa).

Positions 38, 46, 51, 91, 126, 301, and 341 each coordinate FAD.

It belongs to the ferredoxin--NADP reductase type 2 family. Homodimer. The cofactor is FAD.

The catalysed reaction is 2 reduced [2Fe-2S]-[ferredoxin] + NADP(+) + H(+) = 2 oxidized [2Fe-2S]-[ferredoxin] + NADPH. The chain is Ferredoxin--NADP reductase from Paracidovorax citrulli (strain AAC00-1) (Acidovorax citrulli).